Reading from the N-terminus, the 508-residue chain is ATP synthase subunit alpha, chloroplastic (508 aa).

Position 170 to 177 (170 to 177 (GDRQTGKT)) interacts with ATP.

Belongs to the ATPase alpha/beta chains family. In terms of assembly, F-type ATPases have 2 components, CF(1) - the catalytic core - and CF(0) - the membrane proton channel. CF(1) has five subunits: alpha(3), beta(3), gamma(1), delta(1), epsilon(1). CF(0) has four main subunits: a, b, b' and c.

It localises to the plastid. The protein localises to the chloroplast thylakoid membrane. The catalysed reaction is ATP + H2O + 4 H(+)(in) = ADP + phosphate + 5 H(+)(out). Produces ATP from ADP in the presence of a proton gradient across the membrane. The alpha chain is a regulatory subunit. This Helianthus annuus (Common sunflower) protein is ATP synthase subunit alpha, chloroplastic.